We begin with the raw amino-acid sequence, 60 residues long: UPF0337 protein SSP1134 (60 aa).

The tract at residues 1–41 is disordered; it reads MADENKFEQAKGNVKETVGNVTDNKELENEGKEDKTSGKAK. A compositionally biased stretch (basic and acidic residues) spans 23–41; that stretch reads DNKELENEGKEDKTSGKAK.

Belongs to the UPF0337 (CsbD) family.

This is UPF0337 protein SSP1134 from Staphylococcus saprophyticus subsp. saprophyticus (strain ATCC 15305 / DSM 20229 / NCIMB 8711 / NCTC 7292 / S-41).